A 461-amino-acid chain; its full sequence is Sensor histidine kinase MctS (461 aa).

Helical transmembrane passes span 7–27 (IIAL…TFIT) and 203–223 (FVIV…TCML). Histidine 259 is subject to Phosphohistidine; by autocatalysis. A Histidine kinase domain is found at 360 to 450 (LYRVAQEAFN…TLTAMMPKSA (91 aa)).

The protein localises to the cell membrane. It carries out the reaction ATP + protein L-histidine = ADP + protein N-phospho-L-histidine.. Member of the two-component regulatory system MctS/MctR, which activates mctP expression. This Rhizobium johnstonii (strain DSM 114642 / LMG 32736 / 3841) (Rhizobium leguminosarum bv. viciae) protein is Sensor histidine kinase MctS.